The following is a 68-amino-acid chain: Dermaseptin-H5 (68 aa).

Residues 1–17 form the signal peptide; the sequence is KSLFLVLFLGMVSLSIC. The propeptide occupies 18 to 38; sequence EEEKRENEDEEKQEDDEQSEM. Residues 19 to 40 are disordered; sequence EEKRENEDEEKQEDDEQSEMKR. The span at 25–35 shows a compositional bias: acidic residues; the sequence is EDEEKQEDDEQ. The residue at position 65 (Leu65) is a Leucine amide. A propeptide spanning residues 67–68 is cleaved from the precursor; sequence EQ.

As to expression, expressed by the skin glands.

The protein resides in the secreted. Its function is as follows. Has antibacterial activity against the Gram-negative bacteria E.coli ATCC 11775 (MIC=0.5 uM), and the Gram-positive bacteria S.aureus ATCC 12600 (MIC=0.5 uM) and M.luteus ATCC 49732 (MIC=2.0 uM). Does not inhibit the growth of the fungus C.albicans. Probably acts by disturbing membrane functions with its amphipathic structure. This is Dermaseptin-H5 from Pithecopus azureus (Orange-legged monkey tree frog).